We begin with the raw amino-acid sequence, 321 residues long: Mechanosensory protein 3 (321 aa).

2 consecutive LIM zinc-binding domains span residues 27–86 (NKCN…DHSI) and 87–152 (HRCA…QMDD). A DNA-binding region (homeobox) is located at residues 217-276 (RRGPRTTIKQNQLDVLNEMFSNTPKPSKHARAKLALETGLSMRVIQVWFQNRRSKERRLK).

Interacts with unc-86; the heterooligomer binds to the promoters of mec-3, mec-4 and mec-7. In terms of tissue distribution, expressed in the mechanosensory neurons ALML, ALMR, PLML, PLMR, AVM and PVM, and the FLPL and FLPR neurons.

It localises to the nucleus. Transcription factor. Specifies differentiation of the set of six touch receptor neurons (TRNs). May positively modulate expression of both its own gene and also of homeobox ARX homolog alr-1 in TRNs, forming a positive feedback loop with alr-1, thereby restricting the variability of expression of mec-3. Required to determine the identity of ALM sensory neurons, acting by interacting with unc-86, thereby preventing unc-86 cooperating with pag-3 to induce BDU-neuron specific genes. Binds cooperatively as a heterodimer with unc-86 to sites in the mec-3 gene promoter. Promotes outgrowth of lateral dendritic branches on the PVD nociceptive neurons, probably acting both directly, and upstream of zinc finger protein egl-46. This chain is Mechanosensory protein 3 (mec-3), found in Caenorhabditis elegans.